The following is a 232-amino-acid chain: Small ribosomal subunit protein uS2 (232 aa).

This sequence belongs to the universal ribosomal protein uS2 family.

In Pelotomaculum thermopropionicum (strain DSM 13744 / JCM 10971 / SI), this protein is Small ribosomal subunit protein uS2.